A 323-amino-acid polypeptide reads, in one-letter code: Dihydrodiol dehydrogenase 3 (323 aa).

NADP(+)-binding positions include Gly20–Phe24 and Asp50. The active-site Proton donor is the Tyr55. His117 lines the substrate pocket. NADP(+)-binding positions include Ser166–Asn167, Gln190, Tyr216–Ser221, and Lys270–Asn280.

The protein belongs to the aldo/keto reductase family.

Its subcellular location is the cytoplasm. This is Dihydrodiol dehydrogenase 3 from Bos taurus (Bovine).